We begin with the raw amino-acid sequence, 682 residues long: ATP-dependent DNA helicase RecG (682 aa).

Residues 46 to 139 (ELRDLEEVKH…LKNGPHQEDK (94 aa)) are wedge domain. The Helicase ATP-binding domain occupies 271–432 (DMSSPYRMNR…VFGEMDVSVI (162 aa)). Residue 284–291 (GDVGSGKT) participates in ATP binding. Positions 385–388 (DEQH) match the DEAH box motif. One can recognise a Helicase C-terminal domain in the interval 451-611 (MLDRILAFVE…GFELSEKDLE (161 aa)).

The protein belongs to the helicase family. RecG subfamily. In terms of assembly, monomer. Interacts with SSB (sbbA), via the latter's 6 C-terminal residues. Colocalizes with DNA pol III subunit gamma/tau (dnaX).

The protein localises to the cytoplasm. It localises to the nucleoid. It carries out the reaction Couples ATP hydrolysis with the unwinding of duplex DNA by translocating in the 3'-5' direction.. It catalyses the reaction ATP + H2O = ADP + phosphate + H(+). With respect to regulation, replication fork regression on Holliday junctions (HJ) is inhibited by DisA; DisA inhibits the ATPase activity of RecG. Its function is as follows. Critical role in recombination and DNA repair. Helps process Holliday junction intermediates to mature products by catalyzing branch migration. Has a DNA unwinding activity characteristic of a DNA helicase with 3'-5' polarity. Unwinds branched duplex DNA (Y-DNA), Holliday junction (HJ) DNA and partially replicated forks as well as catalyzing fork reversal/regression. Does not seem to unwind R-loops. Inhibits the diadenylate cyclase (DAC) activity of DisA in the presence but not absence of HJ DNA, possibly by relocating DisA from the junction. The chain is ATP-dependent DNA helicase RecG from Bacillus subtilis (strain 168).